The sequence spans 347 residues: DNA-directed RNA polymerase subunit alpha (347 aa).

The interval 1–243 (MLIKQGDRLI…DQISVFINFD (243 aa)) is alpha N-terminal domain (alpha-NTD). The tract at residues 260–347 (FNEHLFKSID…EWKRKQQHEA (88 aa)) is alpha C-terminal domain (alpha-CTD).

The protein belongs to the RNA polymerase alpha chain family. In terms of assembly, homodimer. The RNAP catalytic core consists of 2 alpha, 1 beta, 1 beta' and 1 omega subunit. When a sigma factor is associated with the core the holoenzyme is formed, which can initiate transcription.

It carries out the reaction RNA(n) + a ribonucleoside 5'-triphosphate = RNA(n+1) + diphosphate. Its function is as follows. DNA-dependent RNA polymerase catalyzes the transcription of DNA into RNA using the four ribonucleoside triphosphates as substrates. This chain is DNA-directed RNA polymerase subunit alpha, found in Nitratidesulfovibrio vulgaris (strain ATCC 29579 / DSM 644 / CCUG 34227 / NCIMB 8303 / VKM B-1760 / Hildenborough) (Desulfovibrio vulgaris).